We begin with the raw amino-acid sequence, 855 residues long: Pentatricopeptide repeat-containing protein At1g74750 (855 aa).

The segment at 21–40 (GSRPSAADGNSCTCAEDESG) is disordered. PPR repeat units lie at residues 358–392 (DGHT…GCKP), 393–427 (NTVT…GCEP), 428–462 (DRVT…GLSP), 463–497 (DTFT…GCTP), 498–532 (NLVT…GFQP), 533–567 (DKVT…NWVP), 568–602 (DEPV…GLRP), and 603–637 (NVPT…GLHP). The 84-residue stretch at 755-838 (INLHVMSEGT…NSGCFVGSGE (84 aa)) folds into the Smr domain.

Belongs to the PPR family. P subfamily.

The chain is Pentatricopeptide repeat-containing protein At1g74750 from Arabidopsis thaliana (Mouse-ear cress).